We begin with the raw amino-acid sequence, 398 residues long: Dual-specificity RNA methyltransferase RlmN (398 aa).

The Proton acceptor role is filled by Glu-119. Residues 125–364 (EADRATLCVS…TIVRKTRGDD (240 aa)) form the Radical SAM core domain. Residues Cys-132 and Cys-369 are joined by a disulfide bond. Cys-139, Cys-143, and Cys-146 together coordinate [4Fe-4S] cluster. Residues 193-194 (GE), Ser-225, 247-249 (SLH), and Asn-326 contribute to the S-adenosyl-L-methionine site. The active-site S-methylcysteine intermediate is Cys-369.

This sequence belongs to the radical SAM superfamily. RlmN family. The cofactor is [4Fe-4S] cluster.

Its subcellular location is the cytoplasm. It catalyses the reaction adenosine(2503) in 23S rRNA + 2 reduced [2Fe-2S]-[ferredoxin] + 2 S-adenosyl-L-methionine = 2-methyladenosine(2503) in 23S rRNA + 5'-deoxyadenosine + L-methionine + 2 oxidized [2Fe-2S]-[ferredoxin] + S-adenosyl-L-homocysteine. It carries out the reaction adenosine(37) in tRNA + 2 reduced [2Fe-2S]-[ferredoxin] + 2 S-adenosyl-L-methionine = 2-methyladenosine(37) in tRNA + 5'-deoxyadenosine + L-methionine + 2 oxidized [2Fe-2S]-[ferredoxin] + S-adenosyl-L-homocysteine. Its function is as follows. Specifically methylates position 2 of adenine 2503 in 23S rRNA and position 2 of adenine 37 in tRNAs. m2A2503 modification seems to play a crucial role in the proofreading step occurring at the peptidyl transferase center and thus would serve to optimize ribosomal fidelity. This Yersinia pseudotuberculosis serotype O:3 (strain YPIII) protein is Dual-specificity RNA methyltransferase RlmN.